A 273-amino-acid polypeptide reads, in one-letter code: 3-keto-5-aminohexanoate cleavage enzyme (273 aa).

E14 contacts (5S)-5-amino-3-oxohexanoate. Positions 46 and 48 each coordinate Zn(2+). (5S)-5-amino-3-oxohexanoate contacts are provided by S82, G85, and S106. E227 contacts Zn(2+).

The protein belongs to the BKACE family. Kce subfamily. Homotetramer. Zn(2+) serves as cofactor.

The catalysed reaction is (5S)-5-amino-3-oxohexanoate + acetyl-CoA = (3S)-3-aminobutanoyl-CoA + acetoacetate. The protein operates within amino-acid degradation; L-lysine degradation via acetate pathway. Involved in the anaerobic fermentation of lysine. Catalyzes the reversible reaction between 3-keto-5-aminohexanoate (KAH) and acetyl-CoA to form 3-aminobutyryl-CoA and acetoacetate. The reaction involves the deprotonation of KAH, the nucleophilic addition onto acetyl-CoA and the intramolecular transfer of the CoA moiety. The chain is 3-keto-5-aminohexanoate cleavage enzyme from Acetoanaerobium sticklandii (strain ATCC 12662 / DSM 519 / JCM 1433 / CCUG 9281 / NCIMB 10654 / HF) (Clostridium sticklandii).